Consider the following 177-residue polypeptide: Meiotic chromosome segregation protein C17A2.07c (177 aa).

A disordered region spans residues 71–90; sequence EDDSINKPTEEADEAPRTQL. Over residues 74–86 the composition is skewed to basic and acidic residues; it reads SINKPTEEADEAP.

It localises to the nucleus. Involved in meiotic chromosome segregation. The polypeptide is Meiotic chromosome segregation protein C17A2.07c (Schizosaccharomyces pombe (strain 972 / ATCC 24843) (Fission yeast)).